We begin with the raw amino-acid sequence, 379 residues long: uncharacterized protein (379 aa).

This sequence belongs to the glycosyltransferase 28 family.

This is an uncharacterized protein from Methanosarcina mazei (strain ATCC BAA-159 / DSM 3647 / Goe1 / Go1 / JCM 11833 / OCM 88) (Methanosarcina frisia).